Here is an 86-residue protein sequence, read N- to C-terminus: Cytochrome c oxidase subunit 6B1 (86 aa).

Ala2 carries the post-translational modification N-acetylalanine. Positions 27 to 73 constitute a CHCH domain; the sequence is TRNCWQNYLDFHRCQKAMTAKGGDISVCEWYQRVYQSLCPTSWVTDW. Positions 30 to 40 match the Cx9C motif motif; sequence CWQNYLDFHRC. 2 disulfide bridges follow: Cys30–Cys65 and Cys40–Cys54. Positions 54 to 65 match the Cx10C motif motif; it reads CEWYQRVYQSLC.

This sequence belongs to the cytochrome c oxidase subunit 6B family. In terms of assembly, component of the cytochrome c oxidase (complex IV, CIV), a multisubunit enzyme composed of 14 subunits. The complex is composed of a catalytic core of 3 subunits MT-CO1, MT-CO2 and MT-CO3, encoded in the mitochondrial DNA, and 11 supernumerary subunits COX4I1 (or COX4I2), COX5A, COX5B, COX6A1 (or COX6A2), COX6B1 (or COX6B2), COX6C, COX7A2 (or COX7A1), COX7B, COX7C, COX8A and NDUFA4, which are encoded in the nuclear genome. The complex exists as a monomer or a dimer and forms supercomplexes (SCs) in the inner mitochondrial membrane with NADH-ubiquinone oxidoreductase (complex I, CI) and ubiquinol-cytochrome c oxidoreductase (cytochrome b-c1 complex, complex III, CIII), resulting in different assemblies (supercomplex SCI(1)III(2)IV(1) and megacomplex MCI(2)III(2)IV(2)).

The protein localises to the mitochondrion inner membrane. The protein operates within energy metabolism; oxidative phosphorylation. In terms of biological role, component of the cytochrome c oxidase, the last enzyme in the mitochondrial electron transport chain which drives oxidative phosphorylation. The respiratory chain contains 3 multisubunit complexes succinate dehydrogenase (complex II, CII), ubiquinol-cytochrome c oxidoreductase (cytochrome b-c1 complex, complex III, CIII) and cytochrome c oxidase (complex IV, CIV), that cooperate to transfer electrons derived from NADH and succinate to molecular oxygen, creating an electrochemical gradient over the inner membrane that drives transmembrane transport and the ATP synthase. Cytochrome c oxidase is the component of the respiratory chain that catalyzes the reduction of oxygen to water. Electrons originating from reduced cytochrome c in the intermembrane space (IMS) are transferred via the dinuclear copper A center (CU(A)) of subunit 2 and heme A of subunit 1 to the active site in subunit 1, a binuclear center (BNC) formed by heme A3 and copper B (CU(B)). The BNC reduces molecular oxygen to 2 water molecules using 4 electrons from cytochrome c in the IMS and 4 protons from the mitochondrial matrix. The sequence is that of Cytochrome c oxidase subunit 6B1 (COX6B1) from Homo sapiens (Human).